The chain runs to 147 residues: Large ribosomal subunit protein bL9 (147 aa).

It belongs to the bacterial ribosomal protein bL9 family.

Functionally, binds to the 23S rRNA. This chain is Large ribosomal subunit protein bL9, found in Campylobacter jejuni subsp. doylei (strain ATCC BAA-1458 / RM4099 / 269.97).